A 117-amino-acid chain; its full sequence is uncharacterized protein (117 aa).

The helical transmembrane segment at 10–32 (VCYLGDIAASGFLNSIATALIAV) threads the bilayer.

The protein resides in the membrane. This is an uncharacterized protein from Rickettsia conorii (strain ATCC VR-613 / Malish 7).